A 393-amino-acid chain; its full sequence is Protein TsgA (393 aa).

Over 1–10 (MTNSNRIKLT) the chain is Cytoplasmic. A helical membrane pass occupies residues 11–31 (WISFLSYALTGALVIVTGMVM). At 32–50 (GNIADYFHLPVSSMSNTFT) the chain is on the periplasmic side. The chain crosses the membrane as a helical span at residues 51–71 (FLNAGILISIFLNAWLMEIVP). Topologically, residues 72–77 (LKTQLR) are cytoplasmic. A helical transmembrane segment spans residues 78-98 (FGFILMVLAVAGLMFSHSLAL). The Periplasmic segment spans residues 99–100 (FS). A helical transmembrane segment spans residues 101–121 (AAMFVLGLVSGITMSIGTFLI). Topologically, residues 122 to 133 (TQLYEGRQRGSR) are cytoplasmic. Residues 134–154 (LLFTDSFFSMAGMIFPMVAAF) form a helical membrane-spanning segment. Residues 155 to 161 (LLARSIE) lie on the Periplasmic side of the membrane. The helical transmembrane segment at 162-182 (WYWVYACIGLVYLAIFILTFG) threads the bilayer. At 183–205 (CEFPALGKHAQHSQAPVVKEKWG) the chain is on the cytoplasmic side. The chain crosses the membrane as a helical span at residues 206–226 (IGVLFLAVAALCYILGQLGFI). The Periplasmic segment spans residues 227–244 (SWVPEYAKGLGMSLNDAG). Residues 245–265 (ALVSDFWMSYMFGMWAFSFIL) form a helical membrane-spanning segment. Residues 266–272 (RFFDLQR) lie on the Cytoplasmic side of the membrane. Residues 273–293 (ILTVLAGMAAVLMYLFITGTQ) traverse the membrane as a helical segment. Topologically, residues 294 to 297 (AHMP) are periplasmic. The chain crosses the membrane as a helical span at residues 298–318 (WFILTLGFFSSAIYTSIITLG). At 319-331 (SQQTKVASPKLVN) the chain is on the cytoplasmic side. Residues 332 to 352 (FILTCGTIGTMLTFVVTGPIV) form a helical membrane-spanning segment. At 353 to 360 (AHSGPQAA) the chain is on the periplasmic side. A helical membrane pass occupies residues 361 to 381 (LLTANGLYAVVFVMCFALGFV). Residues 382 to 393 (SRHRQHSSPAAH) are Cytoplasmic-facing.

It belongs to the major facilitator superfamily. TsgA family.

Its subcellular location is the cell inner membrane. The chain is Protein TsgA from Salmonella paratyphi A (strain ATCC 9150 / SARB42).